The following is a 306-amino-acid chain: Ribosomal protein L11 methyltransferase (306 aa).

S-adenosyl-L-methionine-binding residues include Thr154, Gly179, Asp201, and Asn242.

This sequence belongs to the methyltransferase superfamily. PrmA family.

Its subcellular location is the cytoplasm. The enzyme catalyses L-lysyl-[protein] + 3 S-adenosyl-L-methionine = N(6),N(6),N(6)-trimethyl-L-lysyl-[protein] + 3 S-adenosyl-L-homocysteine + 3 H(+). Methylates ribosomal protein L11. This chain is Ribosomal protein L11 methyltransferase, found in Xanthomonas axonopodis pv. citri (strain 306).